Consider the following 71-residue polypeptide: Large ribosomal subunit protein bL31 (71 aa).

Positions 16, 18, 37, and 40 each coordinate Zn(2+).

Belongs to the bacterial ribosomal protein bL31 family. Type A subfamily. As to quaternary structure, part of the 50S ribosomal subunit. Requires Zn(2+) as cofactor.

Its function is as follows. Binds the 23S rRNA. The chain is Large ribosomal subunit protein bL31 from Pectobacterium atrosepticum (strain SCRI 1043 / ATCC BAA-672) (Erwinia carotovora subsp. atroseptica).